A 676-amino-acid chain; its full sequence is XK-related protein 5 (676 aa).

7 consecutive transmembrane segments (helical) span residues 37–57, 114–134, 140–160, 206–226, 239–259, 266–286, and 294–314; these read WLAL…FLWF, LLEA…VFLA, IVPG…LVSY, VWVL…LVAQ, LFNL…WDSP, SFYL…TDFL, and LWTV…LVIY. Disordered regions lie at residues 336-362, 372-391, 495-538, and 598-661; these read PIED…DSSS, TSLD…GLGE, LEDN…KEGQ, and PIPG…IQRD. Polar residues predominate over residues 498-509; that stretch reads NATTQKPPATQE.

It belongs to the XK family.

The protein resides in the cell membrane. In Mus musculus (Mouse), this protein is XK-related protein 5.